We begin with the raw amino-acid sequence, 1221 residues long: DNA-directed RNA polymerase subunit beta (1221 aa).

A disordered region spans residues Glu-1176–Lys-1221. Residues Glu-1183–Asp-1215 are compositionally biased toward acidic residues.

The protein belongs to the RNA polymerase beta chain family. In terms of assembly, the RNAP catalytic core consists of 2 alpha, 1 beta, 1 beta' and 1 omega subunit. When a sigma factor is associated with the core the holoenzyme is formed, which can initiate transcription.

It catalyses the reaction RNA(n) + a ribonucleoside 5'-triphosphate = RNA(n+1) + diphosphate. In terms of biological role, DNA-dependent RNA polymerase catalyzes the transcription of DNA into RNA using the four ribonucleoside triphosphates as substrates. This chain is DNA-directed RNA polymerase subunit beta, found in Lactobacillus delbrueckii subsp. bulgaricus (strain ATCC 11842 / DSM 20081 / BCRC 10696 / JCM 1002 / NBRC 13953 / NCIMB 11778 / NCTC 12712 / WDCM 00102 / Lb 14).